The following is a 101-amino-acid chain: MRTPKRTRSPKTKVSLRGETLTLQLTTVSLDTRHMVKRCDERHGRPLPHSQESQHGSATSKKAVRGTADTAPLERISAARGWALPMEATVSVFRAHQWQWN.

A disordered region spans residues 39-74; sequence CDERHGRPLPHSQESQHGSATSKKAVRGTADTAPLE. Residues 50–60 show a composition bias toward polar residues; the sequence is SQESQHGSATS.

This is an uncharacterized protein from Homo sapiens (Human).